The sequence spans 454 residues: tRNA(Ile)-lysidine synthase (454 aa).

31-36 (SGGADS) is an ATP binding site.

It belongs to the tRNA(Ile)-lysidine synthase family.

It is found in the cytoplasm. It carries out the reaction cytidine(34) in tRNA(Ile2) + L-lysine + ATP = lysidine(34) in tRNA(Ile2) + AMP + diphosphate + H(+). Functionally, ligates lysine onto the cytidine present at position 34 of the AUA codon-specific tRNA(Ile) that contains the anticodon CAU, in an ATP-dependent manner. Cytidine is converted to lysidine, thus changing the amino acid specificity of the tRNA from methionine to isoleucine. This is tRNA(Ile)-lysidine synthase from Porphyromonas gingivalis (strain ATCC BAA-308 / W83).